The sequence spans 233 residues: 2,3,4,5-tetrahydropyridine-2,6-dicarboxylate N-acetyltransferase (233 aa).

The protein belongs to the transferase hexapeptide repeat family. DapH subfamily.

The enzyme catalyses (S)-2,3,4,5-tetrahydrodipicolinate + acetyl-CoA + H2O = L-2-acetamido-6-oxoheptanedioate + CoA. Its pathway is amino-acid biosynthesis; L-lysine biosynthesis via DAP pathway; LL-2,6-diaminopimelate from (S)-tetrahydrodipicolinate (acetylase route): step 1/3. Its function is as follows. Catalyzes the transfer of an acetyl group from acetyl-CoA to tetrahydrodipicolinate. This Leuconostoc mesenteroides subsp. mesenteroides (strain ATCC 8293 / DSM 20343 / BCRC 11652 / CCM 1803 / JCM 6124 / NCDO 523 / NBRC 100496 / NCIMB 8023 / NCTC 12954 / NRRL B-1118 / 37Y) protein is 2,3,4,5-tetrahydropyridine-2,6-dicarboxylate N-acetyltransferase.